We begin with the raw amino-acid sequence, 271 residues long: 3-methyl-2-oxobutanoate hydroxymethyltransferase (271 aa).

Positions 44 and 83 each coordinate Mg(2+). 3-methyl-2-oxobutanoate is bound by residues 44 to 45 (DS), Asp83, and Lys112. A Mg(2+)-binding site is contributed by Glu114. The Proton acceptor role is filled by Glu181.

This sequence belongs to the PanB family. In terms of assembly, homodecamer; pentamer of dimers. The cofactor is Mg(2+).

Its subcellular location is the cytoplasm. It carries out the reaction 3-methyl-2-oxobutanoate + (6R)-5,10-methylene-5,6,7,8-tetrahydrofolate + H2O = 2-dehydropantoate + (6S)-5,6,7,8-tetrahydrofolate. It functions in the pathway cofactor biosynthesis; coenzyme A biosynthesis. Its function is as follows. Catalyzes the reversible reaction in which hydroxymethyl group from 5,10-methylenetetrahydrofolate is transferred onto alpha-ketoisovalerate to form ketopantoate. The protein is 3-methyl-2-oxobutanoate hydroxymethyltransferase of Staphylothermus marinus (strain ATCC 43588 / DSM 3639 / JCM 9404 / F1).